The primary structure comprises 408 residues: Acetylornithine aminotransferase (408 aa).

Pyridoxal 5'-phosphate-binding positions include 107–108 and phenylalanine 141; that span reads GT. Arginine 144 serves as a coordination point for N(2)-acetyl-L-ornithine. Residue 227-230 participates in pyridoxal 5'-phosphate binding; the sequence is DEIQ. At lysine 256 the chain carries N6-(pyridoxal phosphate)lysine. Threonine 284 contacts N(2)-acetyl-L-ornithine. Threonine 285 serves as a coordination point for pyridoxal 5'-phosphate.

It belongs to the class-III pyridoxal-phosphate-dependent aminotransferase family. ArgD subfamily. As to quaternary structure, homodimer. It depends on pyridoxal 5'-phosphate as a cofactor.

The protein localises to the cytoplasm. It catalyses the reaction N(2)-acetyl-L-ornithine + 2-oxoglutarate = N-acetyl-L-glutamate 5-semialdehyde + L-glutamate. The protein operates within amino-acid biosynthesis; L-arginine biosynthesis; N(2)-acetyl-L-ornithine from L-glutamate: step 4/4. This chain is Acetylornithine aminotransferase, found in Xanthomonas campestris pv. campestris (strain ATCC 33913 / DSM 3586 / NCPPB 528 / LMG 568 / P 25).